Consider the following 139-residue polypeptide: MQKFEFFEHTADIGIRAYGRNLNEAFENAAVAVFEVMTDTSKVEPKEMREVKIDGYDLENLLYRWIESLLVYYDSEIMLFSKFYVNIDEKNLTLEGKAWGEKFDPNKHERRTVVKAMTYHEMKIENKGNYYILTFVVDI.

The Ca(2+) site is built by D12, D138, and I139.

This sequence belongs to the archease family.

Its function is as follows. Activates the tRNA-splicing ligase complex by facilitating the enzymatic turnover of catalytic subunit RtcB. Acts by promoting the guanylylation of RtcB, a key intermediate step in tRNA ligation. Can also alter the NTP specificity of RtcB such that ATP, dGTP or ITP is used efficiently. In Sulfurisphaera tokodaii (strain DSM 16993 / JCM 10545 / NBRC 100140 / 7) (Sulfolobus tokodaii), this protein is Protein archease.